The following is a 129-amino-acid chain: Lysozyme C (129 aa).

One can recognise a C-type lysozyme domain in the interval 1–129; sequence KIYKRCELAA…VSTWIKDCKL (129 aa). Cystine bridges form between Cys-6/Cys-127, Cys-30/Cys-115, Cys-64/Cys-80, and Cys-76/Cys-94. Catalysis depends on residues Glu-35 and Asp-52.

Belongs to the glycosyl hydrolase 22 family. In terms of assembly, monomer.

The protein resides in the secreted. The enzyme catalyses Hydrolysis of (1-&gt;4)-beta-linkages between N-acetylmuramic acid and N-acetyl-D-glucosamine residues in a peptidoglycan and between N-acetyl-D-glucosamine residues in chitodextrins.. Lysozymes have primarily a bacteriolytic function; those in tissues and body fluids are associated with the monocyte-macrophage system and enhance the activity of immunoagents. The sequence is that of Lysozyme C (LYZ) from Ortalis vetula (Plain chachalaca).